We begin with the raw amino-acid sequence, 300 residues long: NAD kinase (300 aa).

Catalysis depends on Asp-75, which acts as the Proton acceptor. Residues 75–76 (DG), 149–150 (ND), Arg-177, Asp-179, 190–195 (TAYALS), Ala-214, and Gln-248 each bind NAD(+).

This sequence belongs to the NAD kinase family. The cofactor is a divalent metal cation.

It localises to the cytoplasm. It carries out the reaction NAD(+) + ATP = ADP + NADP(+) + H(+). Its function is as follows. Involved in the regulation of the intracellular balance of NAD and NADP, and is a key enzyme in the biosynthesis of NADP. Catalyzes specifically the phosphorylation on 2'-hydroxyl of the adenosine moiety of NAD to yield NADP. In Paraburkholderia phytofirmans (strain DSM 17436 / LMG 22146 / PsJN) (Burkholderia phytofirmans), this protein is NAD kinase.